Reading from the N-terminus, the 155-residue chain is Ribosomal RNA large subunit methyltransferase H (155 aa).

S-adenosyl-L-methionine-binding positions include Leu72, Gly103, and 122–127 (LSTMTL).

Belongs to the RNA methyltransferase RlmH family. As to quaternary structure, homodimer.

The protein localises to the cytoplasm. It catalyses the reaction pseudouridine(1915) in 23S rRNA + S-adenosyl-L-methionine = N(3)-methylpseudouridine(1915) in 23S rRNA + S-adenosyl-L-homocysteine + H(+). Its function is as follows. Specifically methylates the pseudouridine at position 1915 (m3Psi1915) in 23S rRNA. The sequence is that of Ribosomal RNA large subunit methyltransferase H from Nitrosomonas eutropha (strain DSM 101675 / C91 / Nm57).